The chain runs to 231 residues: Large ribosomal subunit protein uL1 (231 aa).

This sequence belongs to the universal ribosomal protein uL1 family. In terms of assembly, part of the 50S ribosomal subunit.

Functionally, binds directly to 23S rRNA. The L1 stalk is quite mobile in the ribosome, and is involved in E site tRNA release. Its function is as follows. Protein L1 is also a translational repressor protein, it controls the translation of the L11 operon by binding to its mRNA. This chain is Large ribosomal subunit protein uL1, found in Mycoplasmopsis agalactiae (strain NCTC 10123 / CIP 59.7 / PG2) (Mycoplasma agalactiae).